Reading from the N-terminus, the 459-residue chain is Cysteine--tRNA ligase (459 aa).

Cys-28 is a binding site for Zn(2+). A 'HIGH' region motif is present at residues 30 to 40 (VTVYDLCHIGH). Residues Cys-209, His-234, and Glu-238 each contribute to the Zn(2+) site. Residues 266 to 270 (KMSKS) carry the 'KMSKS' region motif. Residue Lys-269 participates in ATP binding.

Belongs to the class-I aminoacyl-tRNA synthetase family. As to quaternary structure, monomer. Zn(2+) serves as cofactor.

Its subcellular location is the cytoplasm. It carries out the reaction tRNA(Cys) + L-cysteine + ATP = L-cysteinyl-tRNA(Cys) + AMP + diphosphate. This is Cysteine--tRNA ligase from Histophilus somni (strain 129Pt) (Haemophilus somnus).